A 349-amino-acid chain; its full sequence is tRNA pseudouridine synthase D (349 aa).

Residue F27 participates in substrate binding. D80 serves as the catalytic Nucleophile. Substrate is bound at residue N129. The region spanning 155–303 is the TRUD domain; sequence GVPNYFGAQR…VEASRRAMLL (149 aa). F329 contributes to the substrate binding site.

It belongs to the pseudouridine synthase TruD family.

The catalysed reaction is uridine(13) in tRNA = pseudouridine(13) in tRNA. Functionally, responsible for synthesis of pseudouridine from uracil-13 in transfer RNAs. The polypeptide is tRNA pseudouridine synthase D (Salmonella choleraesuis (strain SC-B67)).